The following is a 79-amino-acid chain: Small ribosomal subunit protein bS18 (79 aa).

The protein belongs to the bacterial ribosomal protein bS18 family. In terms of assembly, part of the 30S ribosomal subunit. Forms a tight heterodimer with protein bS6.

Its function is as follows. Binds as a heterodimer with protein bS6 to the central domain of the 16S rRNA, where it helps stabilize the platform of the 30S subunit. The polypeptide is Small ribosomal subunit protein bS18 (Rhodopseudomonas palustris (strain HaA2)).